We begin with the raw amino-acid sequence, 272 residues long: ATP synthase subunit a (272 aa).

5 helical membrane passes run 41–61 (VLNIDSMFFSVVLGLVFLVLF), 101–121 (VIAPLALTIFVWVFLMNFMDL), 147–167 (DVNITLSMALGVFVLILFYSI), 221–241 (LIFILIAGLLPWWSQWILSVP), and 243–263 (AIFHILIISLQAFIFMVLTIV).

The protein belongs to the ATPase A chain family. As to quaternary structure, F-type ATPases have 2 components, CF(1) - the catalytic core - and CF(0) - the membrane proton channel. CF(1) has five subunits: alpha(3), beta(3), gamma(1), delta(1), epsilon(1). CF(0) has three main subunits: a(1), b(2) and c(9-12). The alpha and beta chains form an alternating ring which encloses part of the gamma chain. CF(1) is attached to CF(0) by a central stalk formed by the gamma and epsilon chains, while a peripheral stalk is formed by the delta and b chains.

The protein resides in the cell inner membrane. Key component of the proton channel; it plays a direct role in the translocation of protons across the membrane. The polypeptide is ATP synthase subunit a (Erwinia tasmaniensis (strain DSM 17950 / CFBP 7177 / CIP 109463 / NCPPB 4357 / Et1/99)).